A 642-amino-acid chain; its full sequence is 4-hydroxy-3-methylbut-2-enyl diphosphate reductase (642 aa).

The 4-hydroxy-3-methylbut-2-enyl diphosphate reductase stretch occupies residues 1 to 282 (MRKVMLAEKA…EEAISKMSEN (282 aa)). Cys13 serves as a coordination point for [4Fe-4S] cluster. 2 residues coordinate (2E)-4-hydroxy-3-methylbut-2-enyl diphosphate: His42 and His77. The dimethylallyl diphosphate site is built by His42 and His77. Isopentenyl diphosphate contacts are provided by His42 and His77. Cys99 provides a ligand contact to [4Fe-4S] cluster. Residue His127 participates in (2E)-4-hydroxy-3-methylbut-2-enyl diphosphate binding. His127 provides a ligand contact to dimethylallyl diphosphate. His127 provides a ligand contact to isopentenyl diphosphate. Glu129 (proton donor) is an active-site residue. Residue Thr165 coordinates (2E)-4-hydroxy-3-methylbut-2-enyl diphosphate. Cys193 serves as a coordination point for [4Fe-4S] cluster. Residues Ser221, Ser222, Asn223, and Ser266 each coordinate (2E)-4-hydroxy-3-methylbut-2-enyl diphosphate. 4 residues coordinate dimethylallyl diphosphate: Ser221, Ser222, Asn223, and Ser266. Ser221, Ser222, Asn223, and Ser266 together coordinate isopentenyl diphosphate. 3 consecutive S1 motif domains span residues 309-377 (GASV…LSVK), 484-552 (GQVV…LSVK), and 569-638 (GSVV…LSIR).

The protein in the N-terminal section; belongs to the IspH family. [4Fe-4S] cluster is required as a cofactor.

It catalyses the reaction isopentenyl diphosphate + 2 oxidized [2Fe-2S]-[ferredoxin] + H2O = (2E)-4-hydroxy-3-methylbut-2-enyl diphosphate + 2 reduced [2Fe-2S]-[ferredoxin] + 2 H(+). The enzyme catalyses dimethylallyl diphosphate + 2 oxidized [2Fe-2S]-[ferredoxin] + H2O = (2E)-4-hydroxy-3-methylbut-2-enyl diphosphate + 2 reduced [2Fe-2S]-[ferredoxin] + 2 H(+). It participates in isoprenoid biosynthesis; dimethylallyl diphosphate biosynthesis; dimethylallyl diphosphate from (2E)-4-hydroxy-3-methylbutenyl diphosphate: step 1/1. Its pathway is isoprenoid biosynthesis; isopentenyl diphosphate biosynthesis via DXP pathway; isopentenyl diphosphate from 1-deoxy-D-xylulose 5-phosphate: step 6/6. Functionally, catalyzes the conversion of 1-hydroxy-2-methyl-2-(E)-butenyl 4-diphosphate (HMBPP) into a mixture of isopentenyl diphosphate (IPP) and dimethylallyl diphosphate (DMAPP). Acts in the terminal step of the DOXP/MEP pathway for isoprenoid precursor biosynthesis. The sequence is that of 4-hydroxy-3-methylbut-2-enyl diphosphate reductase from Clostridium acetobutylicum (strain ATCC 824 / DSM 792 / JCM 1419 / IAM 19013 / LMG 5710 / NBRC 13948 / NRRL B-527 / VKM B-1787 / 2291 / W).